A 249-amino-acid chain; its full sequence is Cell surface glycoprotein CD200 receptor 2 (249 aa).

The signal sequence occupies residues 1-24; that stretch reads MHALGRTPALTLLIFIYNFVSVYT. The 100-residue stretch at 25 to 124 folds into the Ig-like V-type domain; sequence IVSVQMGTKA…GNFHKVYDLQ (100 aa). Topologically, residues 25–220 are extracellular; the sequence is IVSVQMGTKA…TTSTTPSLLT (196 aa). Cysteines 38 and 108 form a disulfide. N-linked (GlcNAc...) asparagine glycosylation is found at Asn73, Asn138, and Asn171. Positions 113-208 constitute an Ig-like C2-type domain; that stretch reads PEGNFHKVYD…GNQSLSIELS (96 aa). A disulfide bridge connects residues Cys143 and Cys192. The chain crosses the membrane as a helical span at residues 221–241; sequence ILYVKMVLLGIILLKVGFAFF. The Cytoplasmic segment spans residues 242-249; the sequence is QKRNVTRT.

Belongs to the CD200R family. As to expression, expressed in bone marrow, spleen, brain, lung, testis and thymus.

It localises to the membrane. In terms of biological role, according to PubMed:15187158 it is a receptor for the CD200 cell surface glycoprotein. According to PubMed:16081818 it is not a receptor for the CD200/OX2 cell surface glycoprotein. Involved in the recruitment or surface expression of the TYROBP receptor. This chain is Cell surface glycoprotein CD200 receptor 2 (Cd200r1l), found in Mus musculus (Mouse).